The sequence spans 681 residues: tRNA wybutosine-synthesizing protein 4 (681 aa).

Over residues 1–11 (MSNKNQRKTKS) the composition is skewed to basic residues. The tract at residues 1–21 (MSNKNQRKTKSKDREVRKTND) is disordered. S-adenosyl-L-methionine-binding positions include arginine 66, glycine 92, aspartate 119, 165-166 (NL), and glutamate 193.

The protein belongs to the methyltransferase superfamily. LCMT family.

It carries out the reaction 7-[(3S)-3-amino-3-carboxypropyl]wyosine(37) in tRNA(Phe) + S-adenosyl-L-methionine = 7-[(3S)-(3-amino-3-methoxycarbonyl)propyl]wyosine(37) in tRNA(Phe) + S-adenosyl-L-homocysteine. The catalysed reaction is 7-[(3S)-(3-amino-3-methoxycarbonyl)propyl]wyosine(37) in tRNA(Phe) + S-adenosyl-L-methionine + CO2 = wybutosine(37) in tRNA(Phe) + S-adenosyl-L-homocysteine + 2 H(+). It participates in tRNA modification; wybutosine-tRNA(Phe) biosynthesis. In terms of biological role, probable S-adenosyl-L-methionine-dependent methyltransferase that acts as a component of the wybutosine biosynthesis pathway. Wybutosine is a hyper modified guanosine with a tricyclic base found at the 3'-position adjacent to the anticodon of eukaryotic phenylalanine tRNA. May methylate the carboxyl group of leucine residues to form alpha-leucine ester residues. The sequence is that of tRNA wybutosine-synthesizing protein 4 (ppm2) from Schizosaccharomyces pombe (strain 972 / ATCC 24843) (Fission yeast).